Reading from the N-terminus, the 222-residue chain is Transmembrane reductase CYB561D2 (222 aa).

At 2–17 (ALSVETESHIYRALRT) the chain is on the cytoplasmic side. The Cytochrome b561 domain occupies 14–217 (ALRTVSGAAA…NQVSNAYLYR (204 aa)). The helical transmembrane segment at 18-38 (VSGAAAHLVALGFTIFVAVLA) threads the bilayer. The Lumenal portion of the chain corresponds to 39 to 46 (RPGSSLFS). Residues 47-67 (WHPVLMSLAFSFLMTEALLVF) form a helical membrane-spanning segment. Heme b is bound at residue histidine 48. At 68 to 85 (SPESSLLRSLSRKGRARC) the chain is on the cytoplasmic side. Heme b is bound by residues histidine 86 and histidine 120. Residues 86 to 106 (HWVLQLLALLCALLGLGLVIL) traverse the membrane as a helical segment. The Lumenal portion of the chain corresponds to 107-122 (HKEQLGKAHLATWHGR). A helical transmembrane segment spans residues 123–143 (AGLLAVLWAGLQCSGGVGLLY). Residues 144-162 (PKLLPRWPLAKLKLYHATS) are Cytoplasmic-facing. Histidine 159 serves as a coordination point for heme b. A helical transmembrane segment spans residues 163–183 (GLVGYLLGGASLLLGMCSLWF). At 184–186 (TAT) the chain is on the lumenal side. A helical transmembrane segment spans residues 187 to 207 (VTGGVWYLAVLCPVITSLVIM). Residues 208–222 (NQVSNAYLYRKRIQP) lie on the Cytoplasmic side of the membrane.

It depends on heme b as a cofactor.

The protein resides in the endoplasmic reticulum membrane. Its subcellular location is the cytoplasmic vesicle membrane. It catalyses the reaction monodehydro-L-ascorbate radical(out) + L-ascorbate(in) = monodehydro-L-ascorbate radical(in) + L-ascorbate(out). The catalysed reaction is Fe(3+)(out) + L-ascorbate(in) = monodehydro-L-ascorbate radical(in) + Fe(2+)(out) + H(+). Transmembrane reductase that may use ascorbate as an electron donor in the cytoplasm and transfer electrons across endoplasmic reticulum membranes to reduce monodehydro-L-ascorbate radical and iron cations Fe(3+) in the lumen of that compartment. This chain is Transmembrane reductase CYB561D2, found in Bos taurus (Bovine).